The sequence spans 159 residues: Phosphopantetheine adenylyltransferase (159 aa).

The protein belongs to the eukaryotic CoaD family.

It localises to the cytoplasm. It catalyses the reaction (R)-4'-phosphopantetheine + ATP + H(+) = 3'-dephospho-CoA + diphosphate. It participates in cofactor biosynthesis; coenzyme A biosynthesis. In terms of biological role, reversibly transfers an adenylyl group from ATP to 4'-phosphopantetheine, yielding dephospho-CoA (dPCoA) and pyrophosphate. This is Phosphopantetheine adenylyltransferase from Thermococcus gammatolerans (strain DSM 15229 / JCM 11827 / EJ3).